A 300-amino-acid polypeptide reads, in one-letter code: Shikimate kinase, chloroplastic (300 aa).

The N-terminal 65 residues, 1 to 65 (MEARVSQSLQ…SDRRVQLKVS (65 aa)), are a transit peptide targeting the chloroplast. 111 to 118 (GMMGCGKT) contacts ATP. Position 118 (Thr-118) interacts with Mg(2+). 3 residues coordinate substrate: Asp-136, Arg-161, and Gly-183. Arg-222 serves as a coordination point for ATP.

Belongs to the shikimate kinase family. It depends on Mg(2+) as a cofactor.

It localises to the plastid. It is found in the chloroplast. It catalyses the reaction shikimate + ATP = 3-phosphoshikimate + ADP + H(+). It functions in the pathway metabolic intermediate biosynthesis; chorismate biosynthesis; chorismate from D-erythrose 4-phosphate and phosphoenolpyruvate: step 5/7. In terms of biological role, catalyzes the specific phosphorylation of the 3-hydroxyl group of shikimic acid using ATP as a cosubstrate. The sequence is that of Shikimate kinase, chloroplastic (SK) from Solanum lycopersicum (Tomato).